Consider the following 435-residue polypeptide: tRNA-2-methylthio-N(6)-dimethylallyladenosine synthase (435 aa).

The MTTase N-terminal domain occupies 2 to 117; sequence KKASIITYGC…IPQAIEKIEN (116 aa). [4Fe-4S] cluster contacts are provided by cysteine 11, cysteine 47, cysteine 80, cysteine 154, cysteine 158, and cysteine 161. A Radical SAM core domain is found at 140-370; the sequence is FGSDQTASIS…MEVQNKCSFY (231 aa). Residues 373-435 form the TRAM domain; the sequence is SKYKGRIVKV…KTWTLYGEIV (63 aa).

The protein belongs to the methylthiotransferase family. MiaB subfamily. As to quaternary structure, monomer. Requires [4Fe-4S] cluster as cofactor.

The protein resides in the cytoplasm. The catalysed reaction is N(6)-dimethylallyladenosine(37) in tRNA + (sulfur carrier)-SH + AH2 + 2 S-adenosyl-L-methionine = 2-methylsulfanyl-N(6)-dimethylallyladenosine(37) in tRNA + (sulfur carrier)-H + 5'-deoxyadenosine + L-methionine + A + S-adenosyl-L-homocysteine + 2 H(+). Catalyzes the methylthiolation of N6-(dimethylallyl)adenosine (i(6)A), leading to the formation of 2-methylthio-N6-(dimethylallyl)adenosine (ms(2)i(6)A) at position 37 in tRNAs that read codons beginning with uridine. The chain is tRNA-2-methylthio-N(6)-dimethylallyladenosine synthase from Fusobacterium nucleatum subsp. nucleatum (strain ATCC 25586 / DSM 15643 / BCRC 10681 / CIP 101130 / JCM 8532 / KCTC 2640 / LMG 13131 / VPI 4355).